The primary structure comprises 377 residues: MAKKDYYEILGVSREADEREIKKAYKRLAMKYHPDRNQGDKEAEDKFKEIKEAYEILTDAQKRAAYDQYGHAAFEQGGMGGGGGGFGGGADFSDIFGDVFGDIFGGGRRQRAARGADLRYNMDLTLEEAVRGVTKEIRIPTLAECDVCHGSGAKKGSEPITCPTCHGAGQVQMRQGFFTVQQPCPHCHGRGTIIKDPCNKCHGHGRIEKSKTLSVKIPAGVDTGDRIRLAGEGEAGENGAPAGDLYVQVQVKAHPIFEREDNNLFCEVPINFAMAALGGEIEVPTLDGRVNLKIPAETQTGKMFRMRGRGVKSVRGGAQGDLLCRVVVETPVNLNDKQKQLLRELEESFGGPASDKNSPRSKRFFDGVKKFFDDLTR.

Residues 5–70 form the J domain; that stretch reads DYYEILGVSR…QKRAAYDQYG (66 aa). Residues 132 to 210 form a CR-type zinc finger; sequence GVTKEIRIPT…CHGHGRIEKS (79 aa). The Zn(2+) site is built by C145, C148, C162, C165, C184, C187, C198, and C201. CXXCXGXG motif repeat units lie at residues 145–152, 162–169, 184–191, and 198–205; these read CDVCHGSG, CPTCHGAG, CPHCHGRG, and CNKCHGHG.

It belongs to the DnaJ family. Homodimer. Requires Zn(2+) as cofactor.

The protein localises to the cytoplasm. Functionally, participates actively in the response to hyperosmotic and heat shock by preventing the aggregation of stress-denatured proteins and by disaggregating proteins, also in an autonomous, DnaK-independent fashion. Unfolded proteins bind initially to DnaJ; upon interaction with the DnaJ-bound protein, DnaK hydrolyzes its bound ATP, resulting in the formation of a stable complex. GrpE releases ADP from DnaK; ATP binding to DnaK triggers the release of the substrate protein, thus completing the reaction cycle. Several rounds of ATP-dependent interactions between DnaJ, DnaK and GrpE are required for fully efficient folding. Also involved, together with DnaK and GrpE, in the DNA replication of plasmids through activation of initiation proteins. This is Chaperone protein DnaJ from Edwardsiella ictaluri (strain 93-146).